We begin with the raw amino-acid sequence, 292 residues long: Protein CHLOROPLAST ENHANCING STRESS TOLERANCE, chloroplastic (292 aa).

Residues methionine 1–proline 15 are compositionally biased toward pro residues. A chloroplast-targeting transit peptide spans methionine 1 to alanine 67. Disordered stretches follow at residues methionine 1 to aspartate 119 and methionine 206 to aspartate 225. Composition is skewed to low complexity over residues serine 49–arginine 58 and alanine 94–alanine 107. The helical transmembrane segment at alanine 267–phenylalanine 287 threads the bilayer.

Belongs to the Y3IP1/CEST family.

It is found in the plastid. It localises to the chloroplast thylakoid membrane. In terms of biological role, involved in light-induced chloroplast development and growth. Involved in the plant response to abiotic and photooxidative stresses. May be involved in the suppression of photooxidative damage. The chain is Protein CHLOROPLAST ENHANCING STRESS TOLERANCE, chloroplastic from Oryza sativa subsp. indica (Rice).